The chain runs to 216 residues: Uracil-DNA glycosylase (216 aa).

The active-site Proton acceptor is Asp-59.

The protein belongs to the uracil-DNA glycosylase (UDG) superfamily. UNG family.

It is found in the cytoplasm. The catalysed reaction is Hydrolyzes single-stranded DNA or mismatched double-stranded DNA and polynucleotides, releasing free uracil.. Excises uracil residues from the DNA which can arise as a result of misincorporation of dUMP residues by DNA polymerase or due to deamination of cytosine. This Idiomarina loihiensis (strain ATCC BAA-735 / DSM 15497 / L2-TR) protein is Uracil-DNA glycosylase.